A 249-amino-acid chain; its full sequence is 2,3-bisphosphoglycerate-dependent phosphoglycerate mutase (249 aa).

Substrate is bound by residues 9–16, 22–23, arginine 61, 88–91, lysine 99, 115–116, and 184–185; these read RHGESEWN, TG, ERHY, RR, and GN. The active-site Tele-phosphohistidine intermediate is histidine 10. Glutamate 88 (proton donor/acceptor) is an active-site residue.

This sequence belongs to the phosphoglycerate mutase family. BPG-dependent PGAM subfamily.

The enzyme catalyses (2R)-2-phosphoglycerate = (2R)-3-phosphoglycerate. The protein operates within carbohydrate degradation; glycolysis; pyruvate from D-glyceraldehyde 3-phosphate: step 3/5. Its function is as follows. Catalyzes the interconversion of 2-phosphoglycerate and 3-phosphoglycerate. The sequence is that of 2,3-bisphosphoglycerate-dependent phosphoglycerate mutase from Cutibacterium acnes (strain DSM 16379 / KPA171202) (Propionibacterium acnes).